A 497-amino-acid chain; its full sequence is Peptidoglycan endopeptidase RipA (497 aa).

The first 39 residues, Met-1–Ala-39, serve as a signal peptide directing secretion. Positions Ala-177–Glu-192 are enriched in basic and acidic residues. Disordered stretches follow at residues Ala-177–Ala-198 and Ala-253–Trp-297. Residues Ala-255 to Gln-273 are compositionally biased toward pro residues. The region spanning Arg-365–Tyr-497 is the NlpC/P60 domain. Cys-408 acts as the Nucleophile in catalysis. His-457 functions as the Proton acceptor in the catalytic mechanism. Glu-469 is an active-site residue.

The protein belongs to the peptidase C40 family. As to quaternary structure, monomer.

It is found in the secreted. Functionally, peptidoglycan endopeptidase that cleaves the bond between D-glutamate and meso-diaminopimelate. Binds and degrades high-molecular weight peptidoglycan. Required for normal separation of daughter cells after cell division and for cell wall integrity. This is Peptidoglycan endopeptidase RipA (ripA) from Mycolicibacterium smegmatis (strain ATCC 700084 / mc(2)155) (Mycobacterium smegmatis).